A 404-amino-acid chain; its full sequence is Propionate kinase (404 aa).

Belongs to the acetokinase family. PduW subfamily.

It localises to the cytoplasm. It catalyses the reaction propanoate + ATP = propanoyl phosphate + ADP. Its pathway is polyol metabolism; 1,2-propanediol degradation. Its function is as follows. Works with phosphate acetyltransferase (pta) to capture exogenous propionate and regenerate propionyl-CoA during degradation of 1,2-propanediol (1,2-PD). Functionally, expression of a cosmid containing the full 21-gene pdu operon in E.coli allows E.coli to grow on 1,2-propanediol (1,2-PD) with the appearance of bacterial microcompartments (BMC) in its cytoplasm. This chain is Propionate kinase, found in Citrobacter freundii.